The sequence spans 164 residues: Transcriptional repressor NrdR (164 aa).

A zinc finger lies at 3-34 (CPKCNYHKSSVVDSRQAEDGNTIRRRRECEQC). Residues 49–139 (LLVIKKDGTR…VYKSFKDVDE (91 aa)) enclose the ATP-cone domain.

The protein belongs to the NrdR family. Zn(2+) serves as cofactor.

Its function is as follows. Negatively regulates transcription of bacterial ribonucleotide reductase nrd genes and operons by binding to NrdR-boxes. The sequence is that of Transcriptional repressor NrdR from Streptococcus pyogenes serotype M5 (strain Manfredo).